The chain runs to 85 residues: Large ribosomal subunit protein bL27 (85 aa).

Residues 1 to 23 (MAHKKGQGSTQNNRDSAGRRLGV) are disordered.

It belongs to the bacterial ribosomal protein bL27 family.

This chain is Large ribosomal subunit protein bL27, found in Helicobacter hepaticus (strain ATCC 51449 / 3B1).